The primary structure comprises 162 residues: Peptidyl-prolyl cis-trans isomerase (162 aa).

The 147-residue stretch at 16 to 162 (KTAYATIKTN…IESVVFSPSL (147 aa)) folds into the PPIase cyclophilin-type domain.

It belongs to the cyclophilin-type PPIase family.

The enzyme catalyses [protein]-peptidylproline (omega=180) = [protein]-peptidylproline (omega=0). Its function is as follows. PPIases accelerate the folding of proteins. It catalyzes the cis-trans isomerization of proline imidic peptide bonds in oligopeptides. This is Peptidyl-prolyl cis-trans isomerase (ppiA) from Helicobacter pylori (strain J99 / ATCC 700824) (Campylobacter pylori J99).